The following is a 214-amino-acid chain: Rac-like GTP-binding protein 2 (214 aa).

Position 14–21 (14–21 (GDGAVGKT)) interacts with GTP. The Effector region signature appears at 36 to 44 (YIPTVFDNF). GTP is bound by residues 61 to 65 (DTAGQ) and 119 to 122 (TKLD).

Belongs to the small GTPase superfamily. Rho family. In terms of processing, may be palmitoylated.

The protein resides in the cytoplasm. It is found in the membrane. Its function is as follows. Inactive GDP-bound Rho GTPases reside in the cytosol, are found in a complex with Rho GDP-dissociation inhibitors (Rho GDIs), and are released from the GDI protein in order to translocate to membranes upon activation. The protein is Rac-like GTP-binding protein 2 (RAC2) of Oryza sativa subsp. japonica (Rice).